The chain runs to 391 residues: Carbamoyl phosphate synthase small chain (391 aa).

The interval methionine 1–glutamate 202 is CPSase. Positions 47, 254, and 256 each coordinate L-glutamine. A Glutamine amidotransferase type-1 domain is found at lysine 206–alanine 391. The active-site Nucleophile is cysteine 282. L-glutamine contacts are provided by leucine 283, glutamine 286, asparagine 324, glycine 326, and phenylalanine 327. Active-site residues include histidine 366 and glutamate 368.

This sequence belongs to the CarA family. Composed of two chains; the small (or glutamine) chain promotes the hydrolysis of glutamine to ammonia, which is used by the large (or ammonia) chain to synthesize carbamoyl phosphate. Tetramer of heterodimers (alpha,beta)4.

The enzyme catalyses hydrogencarbonate + L-glutamine + 2 ATP + H2O = carbamoyl phosphate + L-glutamate + 2 ADP + phosphate + 2 H(+). The catalysed reaction is L-glutamine + H2O = L-glutamate + NH4(+). It participates in amino-acid biosynthesis; L-arginine biosynthesis; carbamoyl phosphate from bicarbonate: step 1/1. Its pathway is pyrimidine metabolism; UMP biosynthesis via de novo pathway; (S)-dihydroorotate from bicarbonate: step 1/3. Functionally, small subunit of the glutamine-dependent carbamoyl phosphate synthetase (CPSase). CPSase catalyzes the formation of carbamoyl phosphate from the ammonia moiety of glutamine, carbonate, and phosphate donated by ATP, constituting the first step of 2 biosynthetic pathways, one leading to arginine and/or urea and the other to pyrimidine nucleotides. The small subunit (glutamine amidotransferase) binds and cleaves glutamine to supply the large subunit with the substrate ammonia. This Xanthomonas axonopodis pv. citri (strain 306) protein is Carbamoyl phosphate synthase small chain.